We begin with the raw amino-acid sequence, 275 residues long: DNA polymerase II subunit B4 (275 aa).

Residues L11–R17 mediate DNA binding. Over residues A112–K122 the composition is skewed to low complexity. Positions A112 to E275 are disordered. The Nuclear localization signal motif lies at K135–P142. Over residues S151–D161 the composition is skewed to basic and acidic residues. The stretch at K152–D179 forms a coiled coil. 2 stretches are compositionally biased toward acidic residues: residues E162 to G237 and E266 to E275.

It belongs to the NFYB/HAP3 subunit family. Heterotrimeric transcription factor composed of three components, NF-YA, NF-YB and NF-YC. NF-YB and NF-YC must interact and dimerize for NF-YA association and DNA binding. Binds directly with DPB3-1.

It localises to the nucleus. Its function is as follows. Component of the NF-Y/HAP transcription factor complex. The NF-Y complex stimulates the transcription of various genes by recognizing and binding to a CCAAT motif in promoters. This Arabidopsis thaliana (Mouse-ear cress) protein is DNA polymerase II subunit B4.